We begin with the raw amino-acid sequence, 239 residues long: Ribonuclease HII (239 aa).

One can recognise an RNase H type-2 domain in the interval 30–221 (GPVAGVDEVG…VRRLVTAGTP (192 aa)). 3 residues coordinate a divalent metal cation: D36, E37, and D130.

The protein belongs to the RNase HII family. It depends on Mn(2+) as a cofactor. Requires Mg(2+) as cofactor.

The protein localises to the cytoplasm. The enzyme catalyses Endonucleolytic cleavage to 5'-phosphomonoester.. Functionally, endonuclease that specifically degrades the RNA of RNA-DNA hybrids. This chain is Ribonuclease HII, found in Mycobacterium sp. (strain JLS).